A 394-amino-acid chain; its full sequence is Dual-specificity RNA methyltransferase RlmN (394 aa).

The active-site Proton acceptor is Glu92. The Radical SAM core domain maps to 98-341 (ENDRGTLCIS…TTVRRTRGDD (244 aa)). Cysteines 105 and 346 form a disulfide. Cys112, Cys116, and Cys119 together coordinate [4Fe-4S] cluster. S-adenosyl-L-methionine is bound by residues 166 to 167 (GE), Ser198, 220 to 222 (SLH), and Asn303. Cys346 functions as the S-methylcysteine intermediate in the catalytic mechanism. Residues 374-394 (DSAVQRRADAAPSGSATETTR) are disordered.

The protein belongs to the radical SAM superfamily. RlmN family. Requires [4Fe-4S] cluster as cofactor.

The protein localises to the cytoplasm. It catalyses the reaction adenosine(2503) in 23S rRNA + 2 reduced [2Fe-2S]-[ferredoxin] + 2 S-adenosyl-L-methionine = 2-methyladenosine(2503) in 23S rRNA + 5'-deoxyadenosine + L-methionine + 2 oxidized [2Fe-2S]-[ferredoxin] + S-adenosyl-L-homocysteine. It carries out the reaction adenosine(37) in tRNA + 2 reduced [2Fe-2S]-[ferredoxin] + 2 S-adenosyl-L-methionine = 2-methyladenosine(37) in tRNA + 5'-deoxyadenosine + L-methionine + 2 oxidized [2Fe-2S]-[ferredoxin] + S-adenosyl-L-homocysteine. In terms of biological role, specifically methylates position 2 of adenine 2503 in 23S rRNA and position 2 of adenine 37 in tRNAs. m2A2503 modification seems to play a crucial role in the proofreading step occurring at the peptidyl transferase center and thus would serve to optimize ribosomal fidelity. The sequence is that of Dual-specificity RNA methyltransferase RlmN from Methylibium petroleiphilum (strain ATCC BAA-1232 / LMG 22953 / PM1).